Here is a 591-residue protein sequence, read N- to C-terminus: L-fucose isomerase (591 aa).

Active-site proton acceptor residues include Glu337 and Asp361. Glu337, Asp361, and His528 together coordinate Mn(2+).

Belongs to the L-fucose isomerase family. Homohexamer. Requires Mn(2+) as cofactor.

It is found in the cytoplasm. It carries out the reaction L-fucose = L-fuculose. It participates in carbohydrate degradation; L-fucose degradation; L-lactaldehyde and glycerone phosphate from L-fucose: step 1/3. Its function is as follows. Converts the aldose L-fucose into the corresponding ketose L-fuculose. The sequence is that of L-fucose isomerase from Klebsiella pneumoniae (strain 342).